We begin with the raw amino-acid sequence, 400 residues long: uncharacterized protein (400 aa).

In terms of domain architecture, TR mART core spans asparagine 161 to leucine 380.

This is an uncharacterized protein from Acanthamoeba polyphaga (Amoeba).